Here is a 393-residue protein sequence, read N- to C-terminus: Acetylornithine aminotransferase 1 (393 aa).

Arg131 contacts N(2)-acetyl-L-ornithine. 215 to 218 lines the pyridoxal 5'-phosphate pocket; sequence DEVQ. Lys244 is modified (N6-(pyridoxal phosphate)lysine). Thr272 contributes to the N(2)-acetyl-L-ornithine binding site. Thr273 provides a ligand contact to pyridoxal 5'-phosphate.

It belongs to the class-III pyridoxal-phosphate-dependent aminotransferase family. ArgD subfamily. Homodimer. Pyridoxal 5'-phosphate is required as a cofactor.

The protein localises to the cytoplasm. The enzyme catalyses N(2)-acetyl-L-ornithine + 2-oxoglutarate = N-acetyl-L-glutamate 5-semialdehyde + L-glutamate. It functions in the pathway amino-acid biosynthesis; L-arginine biosynthesis; N(2)-acetyl-L-ornithine from L-glutamate: step 4/4. The protein is Acetylornithine aminotransferase 1 of Bordetella parapertussis (strain 12822 / ATCC BAA-587 / NCTC 13253).